The sequence spans 835 residues: Pre-mRNA-processing protein 40C (835 aa).

A compositionally biased stretch (polar residues) spans 1–20; that stretch reads MEGENTTDPPYTTAASSGQS. The tract at residues 1 to 22 is disordered; the sequence is MEGENTTDPPYTTAASSGQSIF. WW domains are found at residues 243–276 and 295–328; these read GNRL…KPPG and SLPG…IPAE. Positions 397 to 459 are disordered; sequence SGMPVSSTIT…DSGPSKEECS (63 aa). Residues 400 to 428 show a composition bias toward polar residues; sequence PVSSTITSEANSGKTTEVTPSGESGNSTG. FF domains are found at residues 455–509, 519–577, and 590–643; these read KEEC…YVKT, RAAH…RVLS, and RAAA…YIAE. Disordered stretches follow at residues 649-677 and 714-738; these read RGDD…RKER and TESK…PADK. FF domains lie at 691–748 and 750–815; these read RKEA…HVKS and YERC…YVED.

Belongs to the PRPF40 family. Interacts (via the WW domains) with the phosphorylated C-terminal domain of NRPB1 (via CTD domain). Expressed in roots, shoots, rosette leaves, cauline leaves, stems and flowers.

It is found in the nucleus. In terms of biological role, binds the phosphorylated C-terminal domain (CTD) of the largest subunit of RNA polymerase II and functions as a scaffold for RNA processing machineries. May be involved in pre-mRNA splicing. This chain is Pre-mRNA-processing protein 40C, found in Arabidopsis thaliana (Mouse-ear cress).